The chain runs to 1235 residues: Topoisomerase 1-associated factor 1 (1235 aa).

4 disordered regions span residues 327 to 357 (RERK…GPPV), 584 to 610 (GEEA…HAER), 812 to 841 (EGAA…TEAR), and 897 to 1235 (EFSP…SDEE). Residues 585-603 (EEAEDVGVPEDNDADDSGD) show a composition bias toward acidic residues. Over residues 929–947 (DDDEEEIRGFLGDDDDEDF) the composition is skewed to acidic residues. The span at 964–973 (QKKRQRKRRR) shows a compositional bias: basic residues. A compositionally biased stretch (acidic residues) spans 977–986 (SGDEEDEGVS). Basic and acidic residues predominate over residues 999–1044 (EKELEKIRKIKSEMYVHASDDETDDERDREFFERERKRQETKDSKF). Composition is skewed to acidic residues over residues 1070-1081 (VLDDEPESDESE) and 1099-1118 (SEEE…SDEE). Over residues 1124-1150 (AKSKTSKRKAAVPSKRPARRPGTAKKR) the composition is skewed to basic residues. A compositionally biased stretch (acidic residues) spans 1156-1170 (SDNDEDEDEEEDAMD). Basic and acidic residues predominate over residues 1193 to 1202 (LGRRIDKMAM). The segment covering 1203–1212 (DDGDEDEDDQ) has biased composition (acidic residues).

It belongs to the timeless family. Component of the fork protection complex (FPC) consisting of tof-1 and csm-3.

It is found in the nucleus. Functionally, forms a fork protection complex (FPC) with csm-3 and which is required for chromosome segregation during meiosis and DNA damage repair. FPC coordinates leading and lagging strand synthesis and moves with the replication fork. FPC stabilizes replication forks in a configuration that is recognized by replication checkpoint sensors. The chain is Topoisomerase 1-associated factor 1 (tof-1) from Neurospora crassa (strain ATCC 24698 / 74-OR23-1A / CBS 708.71 / DSM 1257 / FGSC 987).